The sequence spans 513 residues: V-type proton ATPase subunit B, kidney isoform (513 aa).

Positions 1 to 18 are enriched in polar residues; sequence MATTVDSRSSGFTGNSCD. The interval 1–21 is disordered; it reads MATTVDSRSSGFTGNSCDPGT. Position 394 (arginine 394) interacts with ATP. A PDZ-binding motif is present at residues 510–513; sequence DTAL.

This sequence belongs to the ATPase alpha/beta chains family. As to quaternary structure, V-ATPase is a heteromultimeric enzyme made up of two complexes: the ATP-hydrolytic V1 complex and the proton translocation V0 complex. The V1 complex consists of three catalytic AB heterodimers that form a heterohexamer, three peripheral stalks each consisting of EG heterodimers, one central rotor including subunits D and F, and the regulatory subunits C and H. The proton translocation complex V0 consists of the proton transport subunit a, a ring of proteolipid subunits c9c'', rotary subunit d, subunits e and f, and the accessory subunits ATP6AP1/Ac45 and ATP6AP2/PRR. Forms a complex with NHERF1 and SCL4A7. As to expression, highly expressed in the kidney; found in early distal nephron, encompassing thick ascending limbs and distal convoluted tubules and in the alpha-intercalated cells of the cortical collecting ducts (at protein level). Expressed in the olfactory epithelium (at protein level). Expressed at lower levels in the testis.

The protein resides in the apical cell membrane. It is found in the basolateral cell membrane. Non-catalytic subunit of the V1 complex of vacuolar(H+)-ATPase (V-ATPase), a multisubunit enzyme composed of a peripheral complex (V1) that hydrolyzes ATP and a membrane integral complex (V0) that translocates protons. V-ATPase is responsible for acidifying and maintaining the pH of intracellular compartments and in some cell types, is targeted to the plasma membrane, where it is responsible for acidifying the extracellular environment. Essential for the proper assembly and activity of V-ATPase. In renal intercalated cells, mediates secretion of protons (H+) into the urine thereby ensuring correct urinary acidification. Required for optimal olfactory function by mediating the acidification of the nasal olfactory epithelium. The sequence is that of V-type proton ATPase subunit B, kidney isoform (Atp6v1b1) from Mus musculus (Mouse).